Here is a 283-residue protein sequence, read N- to C-terminus: uncharacterized protein (283 aa).

A run of 3 helical transmembrane segments spans residues 18–38 (VYDI…AKLI), 61–81 (VIYF…LGLD), and 94–114 (IVLG…IFLI).

This sequence belongs to the MscS (TC 1.A.23) family.

It is found in the cell membrane. This is an uncharacterized protein from Archaeoglobus fulgidus (strain ATCC 49558 / DSM 4304 / JCM 9628 / NBRC 100126 / VC-16).